Reading from the N-terminus, the 116-residue chain is MSIRTEKVASLLQQELGMILEKEFPRGGPILTVVEVKVTADLGIAKVYVSVIGSAKEQADTIEYLQQEKKNIRKILSSKIRHHFRRIPELEFYQDRLYEKADRIEQLLKEVRKEQE.

This sequence belongs to the RbfA family. As to quaternary structure, monomer. Binds 30S ribosomal subunits, but not 50S ribosomal subunits or 70S ribosomes.

The protein localises to the cytoplasm. Its function is as follows. One of several proteins that assist in the late maturation steps of the functional core of the 30S ribosomal subunit. Associates with free 30S ribosomal subunits (but not with 30S subunits that are part of 70S ribosomes or polysomes). Required for efficient processing of 16S rRNA. May interact with the 5'-terminal helix region of 16S rRNA. This chain is Ribosome-binding factor A, found in Chlorobium phaeobacteroides (strain DSM 266 / SMG 266 / 2430).